The sequence spans 1353 residues: Protein prickle (1353 aa).

Disordered stretches follow at residues 130 to 206 (VDDG…TKRN), 266 to 292 (QEEEPPEPPKPALPPKQKQPRPVPPLP), and 500 to 540 (AKYS…SAHA). Positions 147–165 (TPTATATAGRPLFPLSSSP) are enriched in low complexity. Positions 166-178 (RRSKKLLRSLRAH) are enriched in basic residues. Residues 179–189 (VKGESRPEKPA) show a composition bias toward basic and acidic residues. Residues 514-532 (LSPALSTPSPPSLLHHPAA) are compositionally biased toward low complexity. The PET domain occupies 548–656 (MDMQRQSHSD…NVRQLMSARP (109 aa)). LIM zinc-binding domains follow at residues 655–719 (RPCD…ETLK), 720–780 (PRCS…MFAE), and 781–843 (YCDY…GEPP). 3 disordered regions span residues 840 to 892 (GEPP…HQAS), 933 to 962 (HCRSGDHAGGGDFTDFSGGRASSTSHNMSP), and 1062 to 1303 (ADIM…SSSS). Residues 861-892 (TQRVRPQTRITSSHASSSPPMSPQQQQQHQAS) are compositionally biased toward low complexity. Composition is skewed to polar residues over residues 952–962 (RASSTSHNMSP) and 1111–1120 (SLNTPLSAHS). Positions 1130–1142 (SILSGASSSSPMS) are enriched in low complexity. The segment covering 1177-1205 (GDKDRDRDRERDRDRDRDKGGDKDRESGR) has biased composition (basic and acidic residues). Basic residues-rich tracts occupy residues 1207–1220 (GPGHSSRRRRRRKS) and 1228–1240 (NHHRSGSGHRSHS). Residues 1269–1284 (ETAHKSPRQQRERERE) show a composition bias toward basic and acidic residues.

It belongs to the prickle / espinas / testin family. In terms of assembly, interacts with dsh; PET and LIM domains interact with dsh DEP domain, in wing cells. Interacts with Vang in photoreceptor cells.

It is found in the cell membrane. Its function is as follows. Acts in a planar cell polarity (PCP) complex; polarization along the apical/basal axis of epithelial cells. PCP signaling in the wing disk requires the receptor fz and the cytoplasmic proteins dsh and pk. These act in a feedback loop leading to activation of the jnk cascade and subsequent polarized arrangement of hairs and bristles. Dgo and pk compete with one another for dsh binding, thereby modulating fz dsh activity and ensuring tight control over fz PCP signaling. Vang, stan and pk function together to regulate the establishment of tissue polarity in the adult eye. The polypeptide is Protein prickle (Drosophila pseudoobscura pseudoobscura (Fruit fly)).